Consider the following 420-residue polypeptide: Hemocyanin 2-c chain (420 aa).

Residues 1–12 show a composition bias toward basic residues; sequence DFGHSKKIRKNV. The segment at 1–20 is disordered; sequence DFGHSKKIRKNVHSLTAEEQ. Histidine 46 serves as a coordination point for Cu cation. Cysteines 52 and 63 form a disulfide. The Cu cation site is built by histidine 66, histidine 73, histidine 185, histidine 189, and histidine 216. Disulfide bonds link cysteine 175-cysteine 242 and cysteine 335-cysteine 342.

O-glycosylated. In terms of tissue distribution, hemolymph.

It localises to the secreted. It is found in the extracellular space. Its function is as follows. Hemocyanins are copper-containing oxygen carriers occurring freely dissolved in the hemolymph of many mollusks and arthropods. The polypeptide is Hemocyanin 2-c chain (Megathura crenulata (Giant keyhole limpet)).